A 113-amino-acid chain; its full sequence is ATP synthase epsilon chain (113 aa).

This sequence belongs to the ATPase epsilon chain family. F-type ATPases have 2 components, CF(1) - the catalytic core - and CF(0) - the membrane proton channel. CF(1) has five subunits: alpha(3), beta(3), gamma(1), delta(1), epsilon(1). CF(0) has three main subunits: a, b and c.

It is found in the cell membrane. In terms of biological role, produces ATP from ADP in the presence of a proton gradient across the membrane. In Wolbachia pipientis subsp. Culex pipiens (strain wPip), this protein is ATP synthase epsilon chain.